The following is a 208-amino-acid chain: MNPVDRPLLDIGLTRLEFLRISGKGLAGLTIAPALLSLLGCKQEDIDSGTVGLINTPKGVLVTQRARCTGCHRCEISCTNFNDGSVGTFFSRIKIHRNYFFGDNGVGSGGGLYGDLNYTADTCRQCKEPQCMNVCPIGAITWQQKEGCITVDHKRCIGCSACTTACPWMMATVNTESKKSSKCVLCGECANACPTGALKIIEWKDITV.

4 consecutive 4Fe-4S ferredoxin-type domains span residues 59 to 88 (GVLV…SVGT), 114 to 145 (GDLN…WQQK), 147 to 176 (GCIT…VNTE), and 174 to 203 (NTES…IIEW). [4Fe-4S] cluster-binding residues include Cys68, Cys71, Cys74, Cys78, Cys123, Cys126, Cys131, Cys135, Cys156, Cys159, Cys162, Cys166, Cys183, Cys186, Cys189, and Cys193.

This is an uncharacterized protein from Escherichia coli O157:H7.